Reading from the N-terminus, the 58-residue chain is Metallothionein-1 (58 aa).

The beta stretch occupies residues 1–28; that stretch reads PGPCCKDKCECAEGGCKTGCKCTSCRCA. Residues cysteine 4, cysteine 5, cysteine 9, cysteine 11, cysteine 16, cysteine 20, cysteine 22, cysteine 25, cysteine 27, cysteine 30, cysteine 33, cysteine 37, cysteine 39, cysteine 45, cysteine 49, cysteine 53, cysteine 55, and cysteine 56 each contribute to the a divalent metal cation site. The tract at residues 29–58 is alpha; it reads PCEKCTSGCKCPSKDECAKTCSKPCSCCXX.

Belongs to the metallothionein superfamily. Type 3 family.

In terms of biological role, metallothioneins have a high content of cysteine residues that bind various heavy metals. The different forms of lobster metallothioneins may have different biological functions. Class I MTS in marine crustacea are involved in the sequestration of elevated levels of heavy-metal ions. Binds 6 metal ions. Known to bind cadmium. This chain is Metallothionein-1, found in Homarus americanus (American lobster).